Reading from the N-terminus, the 113-residue chain is Transmembrane protein 256 (113 aa).

The N-terminal stretch at 1–29 is a signal peptide; the sequence is MAGPAAAFRRLGALSGAAALGFASYGAHG. Residues 30–63 lie on the Extracellular side of the membrane; that stretch reads AQFPDAYGKELFDKANKHHFLHSLALLGVPHCRK. Lys-43 is modified (N6-acetyllysine). A helical membrane pass occupies residues 64–84; it reads PLWAGLLLASGTTLFCTSFYY. The Cytoplasmic segment spans residues 85–92; that stretch reads QALSGDPS. The chain crosses the membrane as a helical span at residues 93-113; the sequence is IQTLAPAGGTLLLLGWLALAL.

Belongs to the TMEM256 family.

It localises to the membrane. This is Transmembrane protein 256 (TMEM256) from Homo sapiens (Human).